A 98-amino-acid polypeptide reads, in one-letter code: Alpha-defensin 1 (98 aa).

A signal peptide spans 1–19 (MRTLTLLTALLLLALQVQT). A propeptide spanning residues 20–63 (QSLEETADQVPAQDQPGAEAQDITISFAGDERSAREASKSLIGT) is cleaved from the precursor. 3 disulfide bridges follow: Cys66-Cys96, Cys68-Cys84, and Cys74-Cys95.

It belongs to the alpha-defensin family. In terms of tissue distribution, paneth cells of the small bowel.

Its subcellular location is the secreted. Functionally, has broad-spectrum antimicrobial properties. The antimicrobial activity decreases in the present of salt in vitro. Binds anionic phospholipids, which leads to the aggregation of liposomes in vitro. Membrane permeabilization of the target cells is an essential part of the peptide's mode of antimicrobial activity. No hemolytic activity against sheep or horse erythrocytes. Has antibacterial activity against the bacterial horse pathogens Gram-positive R.equi ATCC 33701 P(-) (minimum bactericidal concentration or MBC=5 ug/ml) and R.equi ATCC 33701 P(+) (MBC=5 ug/ml), which are resistant against beta-lactam antibiotics. Also has antibacterial activity against highly infectious wild-type strain R.equi 85F P(+) (MBC=5 ug/ml), S.equi subsp. equi (MBC=5 ug/ml), S.equi subsp. zooepidemicus (MBC=5 ug/ml), S.dysgalactiae subsp. equisimilis (MBC=10 ug/ml), S.choleraesuis subsp. choleraesuis serovar Typhimurium (MBC=10 ug/ml), and P.multocida subsp. multocida (MBC=&gt;10 ug/ml). Probably contributes to the antimicrobial barrier function of the small bowel mucosa. The polypeptide is Alpha-defensin 1 (Equus caballus (Horse)).